Here is a 247-residue protein sequence, read N- to C-terminus: Caffeoyl-CoA O-methyltransferase (247 aa).

A substrate-binding site is contributed by Lys-21. Residues Thr-63, Glu-85, 87–88, Ser-93, Asp-111, and Ala-140 each bind S-adenosyl-L-methionine; that span reads GV. Asp-163 contributes to the substrate binding site. Asp-163 is a binding site for a divalent metal cation. Asp-165 provides a ligand contact to S-adenosyl-L-methionine. Residues Asp-189 and Asn-190 each coordinate a divalent metal cation. Asn-194 provides a ligand contact to substrate.

The protein belongs to the class I-like SAM-binding methyltransferase superfamily. Cation-dependent O-methyltransferase family. CCoAMT subfamily. In terms of assembly, homodimer. Ca(2+) serves as cofactor. It depends on Mg(2+) as a cofactor. Zn(2+) is required as a cofactor.

It carries out the reaction (E)-caffeoyl-CoA + S-adenosyl-L-methionine = (E)-feruloyl-CoA + S-adenosyl-L-homocysteine + H(+). Its pathway is aromatic compound metabolism; phenylpropanoid biosynthesis. Methylates caffeoyl-CoA to feruloyl-CoA and 5-hydroxyferuloyl-CoA to sinapoyl-CoA. Plays a role in the synthesis of feruloylated polysaccharides. Involved in the reinforcement of the plant cell wall. Also involved in the responding to wounding or pathogen challenge by the increased formation of cell wall-bound ferulic acid polymers. This is Caffeoyl-CoA O-methyltransferase (CCOMT) from Medicago sativa (Alfalfa).